An 803-amino-acid chain; its full sequence is Volume-regulated anion channel subunit LRRC8C (803 aa).

Over 1–22 (MIPVTEFRQFSEQQPAFRVLKP) the chain is Cytoplasmic. Residues 23–43 (WWDVFTDYLSVAMLMIGVFGC) form a helical membrane-spanning segment. At 44–125 (TLQVMQDKII…YERALHWYAK (82 aa)) the chain is on the extracellular side. 2 disulfide bridges follow: Cys-54/Cys-308 and Cys-115/Cys-293. Residues Asn-64 and Asn-70 are each glycosylated (N-linked (GlcNAc...) asparagine). A helical transmembrane segment spans residues 126–146 (YFPYLVLIHTLVFMLCSNFWF). The Cytoplasmic portion of the chain corresponds to 147 to 266 (KFPGSSSKIE…ILYAMYVRQT (120 aa)). The interval 177–211 (EVSGEDSEEKDNRKNNMNRSNTIQSGPEGSLVKSQ) is disordered. Residues 191 to 211 (NNMNRSNTIQSGPEGSLVKSQ) show a composition bias toward polar residues. Residues Ser-212 and Ser-215 each carry the phosphoserine modification. The helical transmembrane segment at 267–287 (VLKVIKFLIIIAYNSALVSKV) threads the bilayer. Residues 288–320 (QFTVDCNVDIQDMTGYKNFSCNHTMAHLFSKLS) lie on the Extracellular side of the membrane. The chain crosses the membrane as a helical span at residues 321–341 (FCYLCFVSIYGLTCLYTLYWL). Residues 342–803 (FYRSLREYSF…SDVREQMKAD (462 aa)) are Cytoplasmic-facing. LRR repeat units follow at residues 397-420 (ENKL…KLQT), 421-443 (NAHN…VFEI), 446-466 (LQSL…IAQL), 467-488 (DNLQ…ALSF), 490-513 (KENL…MYGL), 515-537 (NLEE…TLES), 541-563 (LKSL…VVDV), 565-587 (SHLQ…NLKK), 588-611 (MTNL…VFSL), 613-635 (SLQE…SFQH), 637-659 (RKLT…IKKL), 660-682 (TSLE…LFLC), 684-705 (KIRY…IGVL), 706-728 (QSLQ…LYFC), 730-751 (KLKT…IGNL), 752-774 (LFLS…LGDC), and 776-799 (ALKR…VREQ).

Belongs to the LRRC8 family. As to quaternary structure, heterohexamer; oligomerizes with other LRRC8 proteins (LRRC8A, LRRC8B, LRRC8D and/or LRRC8E) to form a heterohexamer. Homoheptamer; inactive, likely because it is not targeted to the plasma membrane in the absence of LRRC8A. In vivo, the subunit composition may depend primarily on expression levels, and heterooligomeric channels containing various proportions of the different LRRC8 proteins may coexist.

The protein resides in the cell membrane. It localises to the endoplasmic reticulum membrane. The enzyme catalyses chloride(in) = chloride(out). It catalyses the reaction iodide(out) = iodide(in). It carries out the reaction taurine(out) = taurine(in). The catalysed reaction is 2',3'-cGAMP(out) = 2',3'-cGAMP(in). Functionally, non-essential component of the volume-regulated anion channel (VRAC, also named VSOAC channel), an anion channel required to maintain a constant cell volume in response to extracellular or intracellular osmotic changes. The VRAC channel conducts iodide better than chloride and can also conduct organic osmolytes like taurine. Plays a redundant role in the efflux of amino acids, such as aspartate and glutamate, in response to osmotic stress. The VRAC channel also mediates transport of immunoreactive cyclic dinucleotide GMP-AMP (2'-3'-cGAMP), an immune messenger produced in response to DNA virus in the cytosol. Channel activity requires LRRC8A plus at least one other family member (LRRC8B, LRRC8C, LRRC8D or LRRC8E); channel characteristics depend on the precise subunit composition. This is Volume-regulated anion channel subunit LRRC8C from Rattus norvegicus (Rat).